Reading from the N-terminus, the 165-residue chain is MKYTSYILAFQLCIVLGSLGCYCQDPYVKEAENLKKYFNAVDPDVADNGTLFLDILRNWKEESDRKIMQSQIVSFYFKLFKNFKDDQRIQKSVETIKEDINVKFFNSNKKKWDDFEKLTNYSVTDLNVQRKAVHELIQVMAELSPAAKIGKRKRSQMFRGRRASQ.

Residues 1-23 (MKYTSYILAFQLCIVLGSLGCYC) form the signal peptide. Position 24 is a pyrrolidone carboxylic acid (Gln-24). Residues Asn-48 and Asn-120 are each glycosylated (N-linked (GlcNAc...) asparagine).

The protein belongs to the type II (or gamma) interferon family. As to quaternary structure, homodimer. Interacts with IFNGR1 (via extracellular domain); this interaction promotes IFNGR1 dimerization.

Its subcellular location is the secreted. In terms of biological role, type II interferon produced by immune cells such as T-cells and NK cells that plays crucial roles in antimicrobial, antiviral, and antitumor responses by activating effector immune cells and enhancing antigen presentation. Primarily signals through the JAK-STAT pathway after interaction with its receptor IFNGR1 to affect gene regulation. Upon IFNG binding, IFNGR1 intracellular domain opens out to allow association of downstream signaling components JAK2, JAK1 and STAT1, leading to STAT1 activation, nuclear translocation and transcription of IFNG-regulated genes. Many of the induced genes are transcription factors such as IRF1 that are able to further drive regulation of a next wave of transcription. Plays a role in class I antigen presentation pathway by inducing a replacement of catalytic proteasome subunits with immunoproteasome subunits. In turn, increases the quantity, quality, and repertoire of peptides for class I MHC loading. Increases the efficiency of peptide generation also by inducing the expression of activator PA28 that associates with the proteasome and alters its proteolytic cleavage preference. Up-regulates as well MHC II complexes on the cell surface by promoting expression of several key molecules such as cathepsins B/CTSB, H/CTSH, and L/CTSL. Participates in the regulation of hematopoietic stem cells during development and under homeostatic conditions by affecting their development, quiescence, and differentiation. The protein is Interferon gamma (IFNG) of Papio anubis (Olive baboon).